The sequence spans 417 residues: RH-like protein (417 aa).

11 helical membrane-spanning segments follow: residues 12 to 32, 44 to 64, 77 to 97, 125 to 145, 172 to 192, 203 to 223, 238 to 258, 265 to 285, 287 to 307, 331 to 351, and 358 to 378; these read CLPL…FFFT, LVAS…GLGF, VAFN…LDGF, ISMN…MELV, IHVF…KPLP, TSPS…WPTF, VFST…VSSL, INMT…GASC, VIHS…ISFG, TFGL…ALRV, and MIGF…AMSI.

It belongs to the ammonium transporter (TC 2.A.49) family. Rh subfamily.

The protein resides in the membrane. In terms of biological role, may be part of an oligomeric complex which is likely to have a transport or channel function in the erythrocyte membrane. The protein is RH-like protein of Macaca fascicularis (Crab-eating macaque).